Reading from the N-terminus, the 239-residue chain is Hydroxyacylglutathione hydrolase (239 aa).

The Zn(2+) site is built by histidine 54, histidine 56, aspartate 58, histidine 59, histidine 112, aspartate 131, and histidine 169.

This sequence belongs to the metallo-beta-lactamase superfamily. Glyoxalase II family. Monomer. Zn(2+) is required as a cofactor.

It catalyses the reaction an S-(2-hydroxyacyl)glutathione + H2O = a 2-hydroxy carboxylate + glutathione + H(+). It functions in the pathway secondary metabolite metabolism; methylglyoxal degradation; (R)-lactate from methylglyoxal: step 2/2. Functionally, thiolesterase that catalyzes the hydrolysis of S-D-lactoyl-glutathione to form glutathione and D-lactic acid. This Pelagibacter ubique (strain HTCC1062) protein is Hydroxyacylglutathione hydrolase.